The following is a 198-amino-acid chain: Protein GrpE (198 aa).

The disordered stretch occupies residues 1 to 56 (MVEKKKSQAEKNNQSATEEEIEKAVKGSKRDSNAADEKNSASAAASSSAVSDAEPA). The span at 22-39 (EKAVKGSKRDSNAADEKN) shows a compositional bias: basic and acidic residues. Residues 40-56 (SASAAASSSAVSDAEPA) are compositionally biased toward low complexity.

This sequence belongs to the GrpE family. Homodimer.

The protein resides in the cytoplasm. In terms of biological role, participates actively in the response to hyperosmotic and heat shock by preventing the aggregation of stress-denatured proteins, in association with DnaK and GrpE. It is the nucleotide exchange factor for DnaK and may function as a thermosensor. Unfolded proteins bind initially to DnaJ; upon interaction with the DnaJ-bound protein, DnaK hydrolyzes its bound ATP, resulting in the formation of a stable complex. GrpE releases ADP from DnaK; ATP binding to DnaK triggers the release of the substrate protein, thus completing the reaction cycle. Several rounds of ATP-dependent interactions between DnaJ, DnaK and GrpE are required for fully efficient folding. This is Protein GrpE from Oenococcus oeni (strain ATCC BAA-331 / PSU-1).